The primary structure comprises 461 residues: Phosphoglucosamine mutase (461 aa).

The Phosphoserine intermediate role is filled by S113. 4 residues coordinate Mg(2+): S113, D251, D253, and D255. A Phosphoserine modification is found at S113.

This sequence belongs to the phosphohexose mutase family. Requires Mg(2+) as cofactor. In terms of processing, activated by phosphorylation.

It catalyses the reaction alpha-D-glucosamine 1-phosphate = D-glucosamine 6-phosphate. Functionally, catalyzes the conversion of glucosamine-6-phosphate to glucosamine-1-phosphate. The chain is Phosphoglucosamine mutase from Prochlorococcus marinus (strain SARG / CCMP1375 / SS120).